The sequence spans 201 residues: dITP/XTP pyrophosphatase (201 aa).

Substrate is bound at residue serine 8–lysine 13. Mg(2+) contacts are provided by glutamate 40 and aspartate 69. Catalysis depends on aspartate 69, which acts as the Proton acceptor. Residues serine 70, phenylalanine 155–aspartate 158, lysine 178, and histidine 183–arginine 184 contribute to the substrate site.

The protein belongs to the HAM1 NTPase family. In terms of assembly, homodimer. Mg(2+) is required as a cofactor.

The enzyme catalyses XTP + H2O = XMP + diphosphate + H(+). The catalysed reaction is dITP + H2O = dIMP + diphosphate + H(+). It catalyses the reaction ITP + H2O = IMP + diphosphate + H(+). In terms of biological role, pyrophosphatase that catalyzes the hydrolysis of nucleoside triphosphates to their monophosphate derivatives, with a high preference for the non-canonical purine nucleotides XTP (xanthosine triphosphate), dITP (deoxyinosine triphosphate) and ITP. Seems to function as a house-cleaning enzyme that removes non-canonical purine nucleotides from the nucleotide pool, thus preventing their incorporation into DNA/RNA and avoiding chromosomal lesions. This Ralstonia nicotianae (strain ATCC BAA-1114 / GMI1000) (Ralstonia solanacearum) protein is dITP/XTP pyrophosphatase.